Consider the following 201-residue polypeptide: Large ribosomal subunit protein uL4 (201 aa).

A disordered region spans residues 45–66 (AQLTRSEVSGGGKKPWRQKGTG).

This sequence belongs to the universal ribosomal protein uL4 family. In terms of assembly, part of the 50S ribosomal subunit.

One of the primary rRNA binding proteins, this protein initially binds near the 5'-end of the 23S rRNA. It is important during the early stages of 50S assembly. It makes multiple contacts with different domains of the 23S rRNA in the assembled 50S subunit and ribosome. Functionally, forms part of the polypeptide exit tunnel. The sequence is that of Large ribosomal subunit protein uL4 from Aeromonas salmonicida (strain A449).